The chain runs to 403 residues: Histidine--tRNA ligase (403 aa).

The protein belongs to the class-II aminoacyl-tRNA synthetase family. As to quaternary structure, homodimer.

Its subcellular location is the cytoplasm. It catalyses the reaction tRNA(His) + L-histidine + ATP = L-histidyl-tRNA(His) + AMP + diphosphate + H(+). This chain is Histidine--tRNA ligase (hisS), found in Aquifex aeolicus (strain VF5).